A 266-amino-acid chain; its full sequence is MLAKRIIPCLDVTGGRVVKGVNFLELRDAGDPVEIAARYNGQGADELTFLDITATSDGRDLILPIIEAVASQVFIPLTVGGGVRTVEDVRRLLNAGADKTSFNSAAIANPEVIDAASAKYGAQCIVVAIDAKRRTPEEAARPGPDGAPRGEGWDVYSHGGRKNTGLDAVQWAAEMARRGAGEILLTSMDRDGTKSGFDLALTRAVSDAVSVPVIASGGVGGLDDLADGVQQGGADAVLAASIFHYGEYTVAQAKERMAARGIPVRL.

Active-site residues include aspartate 11 and aspartate 130. The disordered stretch occupies residues 134–157 (RTPEEAARPGPDGAPRGEGWDVYS).

This sequence belongs to the HisA/HisF family. Heterodimer of HisH and HisF.

The protein localises to the cytoplasm. It catalyses the reaction 5-[(5-phospho-1-deoxy-D-ribulos-1-ylimino)methylamino]-1-(5-phospho-beta-D-ribosyl)imidazole-4-carboxamide + L-glutamine = D-erythro-1-(imidazol-4-yl)glycerol 3-phosphate + 5-amino-1-(5-phospho-beta-D-ribosyl)imidazole-4-carboxamide + L-glutamate + H(+). It participates in amino-acid biosynthesis; L-histidine biosynthesis; L-histidine from 5-phospho-alpha-D-ribose 1-diphosphate: step 5/9. Its function is as follows. IGPS catalyzes the conversion of PRFAR and glutamine to IGP, AICAR and glutamate. The HisF subunit catalyzes the cyclization activity that produces IGP and AICAR from PRFAR using the ammonia provided by the HisH subunit. The chain is Imidazole glycerol phosphate synthase subunit HisF from Paracidovorax citrulli (strain AAC00-1) (Acidovorax citrulli).